The following is a 154-amino-acid chain: Ribosomal RNA large subunit methyltransferase H (154 aa).

Residues leucine 70, glycine 102, and 121–126 (LSRLTF) each bind S-adenosyl-L-methionine.

Belongs to the RNA methyltransferase RlmH family. Homodimer.

The protein localises to the cytoplasm. The catalysed reaction is pseudouridine(1915) in 23S rRNA + S-adenosyl-L-methionine = N(3)-methylpseudouridine(1915) in 23S rRNA + S-adenosyl-L-homocysteine + H(+). Functionally, specifically methylates the pseudouridine at position 1915 (m3Psi1915) in 23S rRNA. The polypeptide is Ribosomal RNA large subunit methyltransferase H (Geobacter metallireducens (strain ATCC 53774 / DSM 7210 / GS-15)).